Consider the following 514-residue polypeptide: Probable transposase for insertion sequence element IS1353 (514 aa).

A coiled-coil region spans residues 172-216 (KGDTSLEQRHEALLRELAELESQNQRLRMENAILEKASELIKKDM). The Integrase catalytic domain maps to 346–510 (HASAPNTKWL…SPIEYRHAVG (165 aa)). 2 residues coordinate Mg(2+): Asp357 and Asp417.

Belongs to the transposase 8 family.

Functionally, probably involved in the transposition of insertion sequence IS1353. This Shigella flexneri protein is Probable transposase for insertion sequence element IS1353.